The sequence spans 344 residues: Serine/arginine-rich splicing factor 6 (344 aa).

The RRM 1 domain maps to 1 to 72; that stretch reads MPRVYIGRLS…ERVIVEHARG (72 aa). Phosphoserine occurs at positions 45, 81, and 84. The disordered stretch occupies residues 75–103; the sequence is RDRDGYSYGSRSGGGGYSSRRTSGRDKYG. The RRM 2 domain occupies 110–183; the sequence is YRLIVENLSS…RNIRLIEDKP (74 aa). Lys165 carries the post-translational modification N6-acetyllysine. A disordered region spans residues 176 to 344; it reads IRLIEDKPRT…RSRSRSSSRD (169 aa). Lys182 is covalently cross-linked (Glycyl lysine isopeptide (Lys-Gly) (interchain with G-Cter in SUMO2)). Over residues 185–250 the composition is skewed to basic residues; the sequence is TSHRRSYSGS…RKSRSKSKSK (66 aa). Composition is skewed to basic and acidic residues over residues 264 to 273 and 280 to 291; these read RSKDEYEKSR and SPKENGKGDIKS. Residues Ser297 and Ser299 each carry the phosphoserine modification. Ser303 is subject to Phosphoserine; by DYRK1A. Phosphoserine occurs at positions 314 and 316. Basic residues predominate over residues 322-344; sequence ATSRSRSRSRSKSRSRSRSSSRD.

It belongs to the splicing factor SR family. In terms of assembly, binds SREK1/SFRS12. Interacts with DYRK1A. Post-translationally, extensively phosphorylated on serine residues in the RS domain. Phosphorylated by DYRK1A, probably in the RS domain. Phosphorylation by DYRK1A modulates alternative splice site selection and inhibits the expression of MAPT/Tau exon 10.

It localises to the nucleus. The protein localises to the nucleus speckle. Functionally, plays a role in constitutive splicing and modulates the selection of alternative splice sites. Plays a role in the alternative splicing of MAPT/Tau exon 10. Binds to alternative exons of TNC pre-mRNA and promotes the expression of alternatively spliced TNC. Plays a role in wound healing and in the regulation of keratinocyte differentiation and proliferation via its role in alternative splicing. In Homo sapiens (Human), this protein is Serine/arginine-rich splicing factor 6 (SRSF6).